The following is a 590-amino-acid chain: Glutamine--tRNA ligase (590 aa).

Residues Pro55–His65 carry the 'HIGH' region motif. ATP contacts are provided by residues Glu56–Asn58 and His62–Ser68. L-glutamine-binding residues include Asp93 and Tyr238. Residues Thr257 and Arg292–Leu293 contribute to the ATP site. Residues Ile299 to Arg303 carry the 'KMSKS' region motif.

Belongs to the class-I aminoacyl-tRNA synthetase family. As to quaternary structure, monomer.

The protein resides in the cytoplasm. The enzyme catalyses tRNA(Gln) + L-glutamine + ATP = L-glutaminyl-tRNA(Gln) + AMP + diphosphate. The polypeptide is Glutamine--tRNA ligase (Polynucleobacter asymbioticus (strain DSM 18221 / CIP 109841 / QLW-P1DMWA-1) (Polynucleobacter necessarius subsp. asymbioticus)).